A 342-amino-acid polypeptide reads, in one-letter code: Autoinducer 2 import system permease protein LsrC (342 aa).

At 1 to 13 (MLKFIQNNREITA) the chain is on the periplasmic side. A helical transmembrane segment spans residues 14-34 (LLAVLLLFVLPGFLDRQYLSV). Over 35–38 (QTLT) the chain is Cytoplasmic. Residues 39-59 (MVYSSAQILILLAMGATLVML) traverse the membrane as a helical segment. The Periplasmic portion of the chain corresponds to 60 to 69 (TRNIDVSVGS). The helical transmembrane segment at 70-90 (ITGMCAVLLGMLLNAGYSLPV) threads the bilayer. Residues 91–92 (AC) are Cytoplasmic-facing. The chain crosses the membrane as a helical span at residues 93–113 (VATLLLGLLAGFFNGVLVAWL). A topological domain (periplasmic) is located at residue Lys-114. Residues 115–135 (IPAIVATLGTLGLYRGIMLLW) form a helical membrane-spanning segment. The Cytoplasmic segment spans residues 136–154 (TGGKWIEGLPAELKQLSAP). Residues 155 to 175 (LLLGVSAIGWLTIILVAFMAW) traverse the membrane as a helical segment. Topologically, residues 176–212 (LLAKTAFGRSFYATGDNLQGARQLGVRTEAIRIVAFS) are periplasmic. Residues 213–233 (LNGCMAALAGIVFASQIGFIP) form a helical membrane-spanning segment. Residues 234 to 251 (NQTGTGLEMKAIAACVLG) are Cytoplasmic-facing. A helical membrane pass occupies residues 252–272 (GISLLGGSGAIIGAVLGAWFL). Residues 273–283 (TQIDSVLVLLR) lie on the Periplasmic side of the membrane. Residues 284-304 (IPAWWNDFIAGLVLLAVLVFD) traverse the membrane as a helical segment. Residues 305-342 (GRLRCALELNLRRQKYARFMTPPPSVKPASSGKKREAA) are Cytoplasmic-facing.

This sequence belongs to the binding-protein-dependent transport system permease family. AraH/RbsC subfamily. The complex is composed of two ATP-binding proteins (LsrA), two transmembrane proteins (LsrC and LsrD) and a solute-binding protein (LsrB).

The protein localises to the cell inner membrane. In terms of biological role, part of the ABC transporter complex LsrABCD involved in autoinducer 2 (AI-2) import. Probably responsible for the translocation of the substrate across the membrane. The chain is Autoinducer 2 import system permease protein LsrC (lsrC) from Escherichia coli O157:H7.